The primary structure comprises 636 residues: Chaperone protein DnaK (636 aa).

The residue at position 197 (Thr197) is a Phosphothreonine; by autocatalysis. Positions 596-607 are enriched in low complexity; it reads LYQQAQEQQQSG. Residues 596-636 are disordered; that stretch reads LYQQAQEQQQSGSSGGSSDEDVVEDAEIVDEEDEEKRDDNR. Over residues 613-636 the composition is skewed to acidic residues; it reads SDEDVVEDAEIVDEEDEEKRDDNR.

This sequence belongs to the heat shock protein 70 family.

Acts as a chaperone. This chain is Chaperone protein DnaK, found in Rubrobacter xylanophilus (strain DSM 9941 / JCM 11954 / NBRC 16129 / PRD-1).